Reading from the N-terminus, the 484-residue chain is Putative beta-barrel assembly-enhancing protease (484 aa).

An N-terminal signal peptide occupies residues M1 to A23. H133 is a binding site for Zn(2+). The active site involves E134. Zn(2+) contacts are provided by H137 and E198. The active-site Proton donor is D202. 4 TPR repeats span residues P307 to N340, H341 to N374, V376 to D408, and A426 to G459.

It belongs to the peptidase M48 family. BepA subfamily. It depends on Zn(2+) as a cofactor.

The protein resides in the periplasm. Functionally, functions both as a chaperone and a metalloprotease. Maintains the integrity of the outer membrane by promoting either the assembly or the elimination of outer membrane proteins, depending on their folding state. This chain is Putative beta-barrel assembly-enhancing protease, found in Vibrio cholerae serotype O1 (strain ATCC 39315 / El Tor Inaba N16961).